We begin with the raw amino-acid sequence, 481 residues long: Matrix metalloproteinase-20 (481 aa).

Positions 1–20 (MLPASGLAVLLVTALKFSTA) are cleaved as a signal peptide. A propeptide spanning residues 21-105 (APSLPAASPR…PRCGVPDVAN (85 aa)) is cleaved from the precursor. An N-linked (GlcNAc...) asparagine glycan is attached at N64. Positions 96-103 (PRCGVPDV) match the Cysteine switch motif. C98 is a Zn(2+) binding site. Ca(2+)-binding residues include E162, A163, and D164. Zn(2+)-binding residues include H174 and D176. Positions 181, 182, 184, and 186 each coordinate Ca(2+). Residue H189 participates in Zn(2+) binding. Ca(2+)-binding residues include E195, G196, G198, and D200. H202 contributes to the Zn(2+) binding site. D204 and E207 together coordinate Ca(2+). Residue H224 participates in Zn(2+) binding. The active site involves E225. Positions 228 and 234 each coordinate Zn(2+). 4 Hemopexin repeats span residues 291–341 (PDLC…FPQL), 342–387 (MSNV…GFPR), 389–437 (VQRI…FSGV), and 438–481 (NGQI…WIGC). C294 and C481 are oxidised to a cystine. A glycan (N-linked (GlcNAc...) asparagine) is linked at N297.

The protein belongs to the peptidase M10A family. It depends on Zn(2+) as a cofactor. Ca(2+) is required as a cofactor. Post-translationally, autoactivates at least at the 105-Asn-|-Tyr-106 site. In terms of tissue distribution, expressed in the enamel organ.

It localises to the secreted. It is found in the extracellular space. Its subcellular location is the extracellular matrix. In terms of biological role, degrades amelogenin, the major protein component of the enamel matrix and two of the macromolecules characterizing the cartilage extracellular matrix: aggrecan and the cartilage oligomeric matrix protein (COMP). May play a central role in tooth enamel formation. Cleaves aggrecan at the '360-Ser-|-Phe-361' site. This chain is Matrix metalloproteinase-20 (MMP20), found in Bos taurus (Bovine).